Here is a 217-residue protein sequence, read N- to C-terminus: tRNA (guanine-N(7)-)-methyltransferase (217 aa).

Glutamate 48, glutamate 73, asparagine 100, and aspartate 123 together coordinate S-adenosyl-L-methionine. Residue aspartate 123 is part of the active site. The substrate site is built by lysine 127 and aspartate 159.

The protein belongs to the class I-like SAM-binding methyltransferase superfamily. TrmB family.

The enzyme catalyses guanosine(46) in tRNA + S-adenosyl-L-methionine = N(7)-methylguanosine(46) in tRNA + S-adenosyl-L-homocysteine. It functions in the pathway tRNA modification; N(7)-methylguanine-tRNA biosynthesis. Functionally, catalyzes the formation of N(7)-methylguanine at position 46 (m7G46) in tRNA. In Leptospira interrogans serogroup Icterohaemorrhagiae serovar copenhageni (strain Fiocruz L1-130), this protein is tRNA (guanine-N(7)-)-methyltransferase.